A 190-amino-acid polypeptide reads, in one-letter code: Ras-like GTP-binding protein RhoL (190 aa).

18–25 (GDGMVGKT) lines the GTP pocket. Positions 40 to 48 (YIPTVFDNH) match the Effector region motif. Residues 65-69 (DTAGQ) and 123-126 (TKLD) contribute to the GTP site. At cysteine 187 the chain carries Cysteine methyl ester. The S-geranylgeranyl cysteine moiety is linked to residue cysteine 187. A propeptide spans 188–190 (KIL) (removed in mature form).

It belongs to the small GTPase superfamily. Rho family. Highly expressed in the embryonic cephalic mesoderm starting from stage 6 and fading by stage 11. Hemocyte precursor cells.

The protein localises to the cell membrane. In terms of biological role, essential for the maturation of hemocytes. This chain is Ras-like GTP-binding protein RhoL (RhoL), found in Drosophila melanogaster (Fruit fly).